A 265-amino-acid polypeptide reads, in one-letter code: Cyclin-B2-5 (265 aa).

This sequence belongs to the cyclin family. Cyclin AB subfamily.

This chain is Cyclin-B2-5 (CYCB2-5), found in Arabidopsis thaliana (Mouse-ear cress).